The following is a 465-amino-acid chain: Trigger factor (465 aa).

The PPIase FKBP-type domain occupies 164-245 (GDFVSIDLSA…VQSVKERELP (82 aa)). Residues 430-465 (GNTVDTAEMFGEPAAEPEQADAAQAGDAEKAAADSE) form a disordered region. Positions 440–455 (GEPAAEPEQADAAQAG) are enriched in low complexity. The span at 456 to 465 (DAEKAAADSE) shows a compositional bias: basic and acidic residues.

It belongs to the FKBP-type PPIase family. Tig subfamily.

It localises to the cytoplasm. It catalyses the reaction [protein]-peptidylproline (omega=180) = [protein]-peptidylproline (omega=0). Functionally, involved in protein export. Acts as a chaperone by maintaining the newly synthesized protein in an open conformation. Functions as a peptidyl-prolyl cis-trans isomerase. This chain is Trigger factor, found in Nocardia farcinica (strain IFM 10152).